The chain runs to 178 residues: Probable DNA-directed RNA polymerase subunit delta (178 aa).

Residues 14-81 (LSLIDVAHFI…GNNTWGLRAW (68 aa)) form the HTH HARE-type domain. Disordered regions lie at residues 88 to 122 (DEEVQTQTTPKKKRKSDDDEDEDEEILDDDVDYDD) and 141 to 178 (LDEDEDDDDHLPDGIEGDLATVEDDYTDGDYTEDPEDK). 3 stretches are compositionally biased toward acidic residues: residues 105–122 (DDEDEDEEILDDDVDYDD), 141–150 (LDEDEDDDDH), and 161–178 (TVEDDYTDGDYTEDPEDK).

It belongs to the RpoE family. In terms of assembly, RNAP is composed of a core of 2 alpha, a beta and a beta' subunits. The core is associated with a delta subunit and one of several sigma factors.

Its function is as follows. Participates in both the initiation and recycling phases of transcription. In the presence of the delta subunit, RNAP displays an increased specificity of transcription, a decreased affinity for nucleic acids, and an increased efficiency of RNA synthesis because of enhanced recycling. The protein is Probable DNA-directed RNA polymerase subunit delta of Listeria monocytogenes serovar 1/2a (strain ATCC BAA-679 / EGD-e).